The chain runs to 362 residues: 3-dehydroquinate synthase (362 aa).

Residues 70–75 (DGEKYK), 104–108 (GVIGD), 128–129 (TT), K141, and K150 contribute to the NAD(+) site. Residues E183, H246, and H263 each contribute to the Zn(2+) site.

It belongs to the sugar phosphate cyclases superfamily. Dehydroquinate synthase family. Co(2+) is required as a cofactor. Requires Zn(2+) as cofactor. The cofactor is NAD(+).

Its subcellular location is the cytoplasm. It catalyses the reaction 7-phospho-2-dehydro-3-deoxy-D-arabino-heptonate = 3-dehydroquinate + phosphate. Its pathway is metabolic intermediate biosynthesis; chorismate biosynthesis; chorismate from D-erythrose 4-phosphate and phosphoenolpyruvate: step 2/7. Its function is as follows. Catalyzes the conversion of 3-deoxy-D-arabino-heptulosonate 7-phosphate (DAHP) to dehydroquinate (DHQ). The chain is 3-dehydroquinate synthase from Acinetobacter baylyi (strain ATCC 33305 / BD413 / ADP1).